The chain runs to 225 residues: NAD(P)H-quinone oxidoreductase subunit K, chloroplastic (225 aa).

Cysteine 43, cysteine 44, cysteine 108, and cysteine 139 together coordinate [4Fe-4S] cluster.

Belongs to the complex I 20 kDa subunit family. In terms of assembly, NDH is composed of at least 16 different subunits, 5 of which are encoded in the nucleus. It depends on [4Fe-4S] cluster as a cofactor.

The protein localises to the plastid. It is found in the chloroplast thylakoid membrane. It catalyses the reaction a plastoquinone + NADH + (n+1) H(+)(in) = a plastoquinol + NAD(+) + n H(+)(out). It carries out the reaction a plastoquinone + NADPH + (n+1) H(+)(in) = a plastoquinol + NADP(+) + n H(+)(out). Functionally, NDH shuttles electrons from NAD(P)H:plastoquinone, via FMN and iron-sulfur (Fe-S) centers, to quinones in the photosynthetic chain and possibly in a chloroplast respiratory chain. The immediate electron acceptor for the enzyme in this species is believed to be plastoquinone. Couples the redox reaction to proton translocation, and thus conserves the redox energy in a proton gradient. The polypeptide is NAD(P)H-quinone oxidoreductase subunit K, chloroplastic (Nandina domestica (Heavenly bamboo)).